A 234-amino-acid chain; its full sequence is LexA repressor (234 aa).

Residues 26–46 (FDEMKEALDLASKSGIHRLIT) constitute a DNA-binding region (H-T-H motif). Residues 73–107 (ATAAAPPKGRGAFRPQVFEGGGAPPPAASPAAAAN) are disordered. Catalysis depends on for autocatalytic cleavage activity residues Ser-155 and Lys-192.

It belongs to the peptidase S24 family. Homodimer.

The catalysed reaction is Hydrolysis of Ala-|-Gly bond in repressor LexA.. Functionally, represses a number of genes involved in the response to DNA damage (SOS response), including recA and lexA. In the presence of single-stranded DNA, RecA interacts with LexA causing an autocatalytic cleavage which disrupts the DNA-binding part of LexA, leading to derepression of the SOS regulon and eventually DNA repair. This is LexA repressor from Caulobacter vibrioides (strain ATCC 19089 / CIP 103742 / CB 15) (Caulobacter crescentus).